Reading from the N-terminus, the 447-residue chain is GTPase Der (447 aa).

2 EngA-type G domains span residues 3-167 (PVIA…VQER) and 181-354 (VKIA…AAAM). GTP is bound by residues 9-16 (GRPNVGKS), 56-60 (DTGGF), 119-122 (NKAE), 187-194 (GRPNVGKS), 234-238 (DTAGL), and 299-302 (NKWD). A KH-like domain is found at 355 to 439 (IKLPTPQITR…PLRIEFRTNK (85 aa)).

The protein belongs to the TRAFAC class TrmE-Era-EngA-EngB-Septin-like GTPase superfamily. EngA (Der) GTPase family. In terms of assembly, associates with the 50S ribosomal subunit.

In terms of biological role, GTPase that plays an essential role in the late steps of ribosome biogenesis. The polypeptide is GTPase Der (Cupriavidus metallidurans (strain ATCC 43123 / DSM 2839 / NBRC 102507 / CH34) (Ralstonia metallidurans)).